The primary structure comprises 1069 residues: MDDSDDEYSRSHGETLTFVDPEDDGVSIGNTQDSQFAYEQFSVPTQSSQATDLLPGGTDGTTNDLPFHDVEDDESDSEKSLTEEQHEQKLPEHACRYCGISDPLCVAKCTVCRKWFCNSNDGTSGGHIVHHMVRSQHKEAYTHKDSPCGDTQLECYRCGSKNVFNLGFIPGKKDQVVVIICRTPCASIAFQNDDNWSPEDWKSVIAEKQLLSWIVNVPSEEQVARARKITATQAVRMEELWRDHPEATVDDLNKPGLDREPDHVQLRYVDAHHYSKVFRPLVAIEAEYDRRVKESASQAVGTVRWEQGLRQSVLAFFHLPQFADGVMKLAKGDELRLKHSQTVDGSEWTKIGSVFKIPDNHGDEVGIEIRGAVDKSVMESRIMFTVDVVWNATTFERQYKALAALLNDSKAISPYLYQKLLGHPAEEMMLKFDLPRRLSVAGLPELNSSQMQAVKQVLTRPLSLIQGPPGTGKTVVSATIVYHLVQKTEGNVLVCSPSNIAVDHLAEKIHKTGLKVVRLCARSREHSETTVPYLTLQHQLKVMGGAELQKLIQLKDEAGELEFKDDLRYMQLKRVKEHELLAAADVICCTCSSAADARLSKIRTRTVLIDESTQATEPEILVSIMRGVRQLVLVGDHCQLGPVVICKKAAIAGLSQSLFERLVLLGIRPFRLQVQYRMHPVLSEFPSNVFYDGSLQNGVTENDRHMTGVDWHWPKPNKPAFFWHCSGSEELSASGTSFLNRTEAANVEKLVSKLIKAGVQPHQIGVITSYEGQRSFIVNYMHTQGTLNSKLYENVEIASVDAFQGREKDYIIVTCVRSNDILGIGFLSDPRRLNVAITRAKYGLVLVGNAKVLARHDLWHELINHYKSKEMLYEGPINALKPLNLALPKATIRTKNNIAGNANRFGIKRMQYTFNEYKSNDPSQPRLPPTYSNSQNLLSMSKLAQTFNKNVPIPAHMMDPNVYAAARNQKDRRRGDQRRPPPQAEAAMDLSQGMMSQQSQQYPPQGASSQSQYLLDGASSLSGWSQSQTTTTTTRHHHHRQNRNSQQQMSQDMDDIQQKMDDLLFSQDC.

The segment at 1-86 is disordered; the sequence is MDDSDDEYSR…SEKSLTEEQH (86 aa). A compositionally biased stretch (polar residues) spans 28-50; sequence IGNTQDSQFAYEQFSVPTQSSQA. A compositionally biased stretch (low complexity) spans 51–65; that stretch reads TDLLPGGTDGTTNDL. Residues 77-86 are compositionally biased toward basic and acidic residues; it reads SEKSLTEEQH. The region spanning 87-244 is the Upf1 CH-rich domain; sequence EQKLPEHACR…VRMEELWRDH (158 aa). Zn(2+) contacts are provided by Cys95, Cys98, Cys109, Cys112, Cys117, His127, His131, His137, Cys155, Cys158, Cys181, and Cys185. Positions 95–127 are C3H; it reads CRYCGISDPLCVAKCTVCRKWFCNSNDGTSGGH. Residues 109–137 form a CC/SHH/C region; the sequence is CTVCRKWFCNSNDGTSGGHIVHHMVRSQH. The interval 155-185 is C4; sequence CYRCGSKNVFNLGFIPGKKDQVVVIICRTPC. Residues Gln450, 467-474, Gln639, Tyr676, and Glu807 contribute to the ATP site; that span reads GPPGTGKT. A disordered region spans residues 966–1069; that stretch reads ARNQKDRRRG…MDDLLFSQDC (104 aa). Residues 991-1013 show a composition bias toward low complexity; it reads SQGMMSQQSQQYPPQGASSQSQY.

It belongs to the DNA2/NAM7 helicase family. In terms of processing, phosphorylated probably by smg-1. Smg-3 and smg-4 are required for phosphorylation.

The protein localises to the cytoplasm. It catalyses the reaction ATP + H2O = ADP + phosphate + H(+). RNA-dependent helicase required for nonsense-mediated decay (NMD) of aberrant mRNAs containing premature stop codons and modulates the expression level of normal mRNAs. Is recruited to mRNAs upon translation termination and undergoes a cycle of phosphorylation and dephosphorylation; its phosphorylation appears to be a key step in NMD. The formation of an smg-2-3-4 surveillance complex is believed to activate NMD. The protein is Regulator of nonsense transcripts 1 (smg-2) of Caenorhabditis elegans.